Here is a 213-residue protein sequence, read N- to C-terminus: Ribonuclease T (213 aa).

An Exonuclease domain is found at 28 to 202 (VVVDVETGGF…YDTEQTARLF (175 aa)). Mg(2+)-binding residues include D31, E33, H189, and D194. H189 acts as the Proton donor/acceptor in catalysis.

It belongs to the RNase T family. As to quaternary structure, homodimer. The cofactor is Mg(2+).

Trims short 3' overhangs of a variety of RNA species, leaving a one or two nucleotide 3' overhang. Responsible for the end-turnover of tRNA: specifically removes the terminal AMP residue from uncharged tRNA (tRNA-C-C-A). Also appears to be involved in tRNA biosynthesis. The polypeptide is Ribonuclease T (Xanthomonas euvesicatoria pv. vesicatoria (strain 85-10) (Xanthomonas campestris pv. vesicatoria)).